The following is a 206-amino-acid chain: uncharacterized protein (206 aa).

The tract at residues 147–206 (REEKAQKSKSKSRNQDERGSPLDERLGPKVSDLTLMERIFQVRRKPRKSRRDRRSRVSKR) is disordered. Residues 159–173 (RNQDERGSPLDERLG) are compositionally biased toward basic and acidic residues. Positions 187 to 206 (QVRRKPRKSRRDRRSRVSKR) are enriched in basic residues.

This is an uncharacterized protein from Schizosaccharomyces pombe (strain 972 / ATCC 24843) (Fission yeast).